The chain runs to 130 residues: MTFYSSGEEAQHQWKQLQTQQNKKNSPRPVTSSRDFRSRVQGNQSNTIFTHLTKSAANSQCQLQKDLKKTLQLQHFLQTLEQKTSPSKHKRKRTKYRRTKKSKHHSRKKTTSSSSSSERDSTTGRESESS.

2 disordered regions span residues 1-47 and 78-130; these read MTFY…QSNT and QTLE…SESS. Over residues 13–33 the composition is skewed to polar residues; sequence QWKQLQTQQNKKNSPRPVTSS. Positions 86 to 110 are enriched in basic residues; it reads PSKHKRKRTKYRRTKKSKHHSRKKT. Basic and acidic residues predominate over residues 117–130; it reads SERDSTTGRESESS.

This is an uncharacterized protein from Torque teno mini virus 1 (isolate TLMV-CBD279).